Here is a 201-residue protein sequence, read N- to C-terminus: Small ribosomal subunit protein uS4c (201 aa).

Positions 89 to 149 (MRLDNILFRL…DKPKSGALIK (61 aa)) constitute an S4 RNA-binding domain.

Belongs to the universal ribosomal protein uS4 family. In terms of assembly, part of the 30S ribosomal subunit. Contacts protein S5. The interaction surface between S4 and S5 is involved in control of translational fidelity.

The protein resides in the plastid. Its function is as follows. One of the primary rRNA binding proteins, it binds directly to 16S rRNA where it nucleates assembly of the body of the 30S subunit. With S5 and S12 plays an important role in translational accuracy. The protein is Small ribosomal subunit protein uS4c (rps4) of Cuscuta reflexa (Southern Asian dodder).